The following is a 549-amino-acid chain: Teichoic acids export ATP-binding protein TagH (549 aa).

Positions 22 to 243 constitute an ABC transporter domain; that stretch reads DKLKDLFFRS…YDEFLKKYNQ (222 aa). ATP is bound at residue 57 to 64; the sequence is GLNGSGKS. Residues 244 to 549 are unknown; that stretch reads MSVEERKDLR…EIQSISIVKK (306 aa). The SH3b domain occupies 346–415; the sequence is AAKYIVNSNG…ISTKFIEPFK (70 aa).

This sequence belongs to the ABC transporter superfamily. Teichoic acids exporter (TC 3.A.1.104.1) family. As to quaternary structure, the complex is composed of two ATP-binding proteins (TagH) and two transmembrane proteins (TagG).

It is found in the cell membrane. The enzyme catalyses ATP + H2O + teichoic acidSide 1 = ADP + phosphate + teichoic acidSide 2.. Functionally, part of the ABC transporter complex TagGH involved in teichoic acids export. Responsible for energy coupling to the transport system. In Bacillus anthracis, this protein is Teichoic acids export ATP-binding protein TagH.